Reading from the N-terminus, the 670-residue chain is DUF724 domain-containing protein 1 (670 aa).

2 disordered regions span residues 283–315 and 368–445; these read HNGP…PMTP and ANAE…NNDD. 3 stretches are compositionally biased toward polar residues: residues 294–309, 379–392, and 426–442; these read SPSN…SSSG, RNQN…TQQM, and CNGS…SICN. A DUF724 domain is found at 484–669; sequence PFAKKLPFWK…LEFQTTVSTP (186 aa).

In terms of tissue distribution, expressed in stems and flowers.

The protein resides in the nucleus. Functionally, may be involved in the polar growth of plant cells via transportation of RNAs. The protein is DUF724 domain-containing protein 1 of Arabidopsis thaliana (Mouse-ear cress).